Consider the following 1072-residue polypeptide: Carbamoyl phosphate synthase large chain (1072 aa).

The tract at residues 1 to 401 is carboxyphosphate synthetic domain; the sequence is MPKRLDINTI…SLLKAVRSLE (401 aa). Residues R129, R169, G175, G176, K208, I210, E215, G241, V242, H243, Q284, and E298 each coordinate ATP. The region spanning 133–327 is the ATP-grasp 1 domain; that stretch reads RTLMQDLNEP…IAKLAAKIAV (195 aa). Mg(2+) is bound by residues Q284, E298, and N300. The Mn(2+) site is built by Q284, E298, and N300. Residues 402–546 form an oligomerization domain region; sequence LGIYHLELDH…YSTYADENES (145 aa). The tract at residues 547–929 is carbamoyl phosphate synthetic domain; that stretch reads IVTDRKSVVV…ALYKGLVASG (383 aa). In terms of domain architecture, ATP-grasp 2 spans 671 to 861; that stretch reads EAALTKLGIP…MANVATKVIL (191 aa). ATP contacts are provided by R707, R746, E752, G777, V778, H779, S780, Q820, and E832. Mg(2+)-binding residues include Q820, E832, and N834. Mn(2+) is bound by residues Q820, E832, and N834. The MGS-like domain occupies 930–1072; it reads INIPTHGSVI…QTKRHEVVHA (143 aa). The tract at residues 930–1072 is allosteric domain; it reads INIPTHGSVI…QTKRHEVVHA (143 aa).

This sequence belongs to the CarB family. As to quaternary structure, composed of two chains; the small (or glutamine) chain promotes the hydrolysis of glutamine to ammonia, which is used by the large (or ammonia) chain to synthesize carbamoyl phosphate. Tetramer of heterodimers (alpha,beta)4. It depends on Mg(2+) as a cofactor. Mn(2+) is required as a cofactor.

It catalyses the reaction hydrogencarbonate + L-glutamine + 2 ATP + H2O = carbamoyl phosphate + L-glutamate + 2 ADP + phosphate + 2 H(+). The enzyme catalyses hydrogencarbonate + NH4(+) + 2 ATP = carbamoyl phosphate + 2 ADP + phosphate + 2 H(+). Its pathway is amino-acid biosynthesis; L-arginine biosynthesis; carbamoyl phosphate from bicarbonate: step 1/1. It functions in the pathway pyrimidine metabolism; UMP biosynthesis via de novo pathway; (S)-dihydroorotate from bicarbonate: step 1/3. Its function is as follows. Large subunit of the glutamine-dependent carbamoyl phosphate synthetase (CPSase). CPSase catalyzes the formation of carbamoyl phosphate from the ammonia moiety of glutamine, carbonate, and phosphate donated by ATP, constituting the first step of 2 biosynthetic pathways, one leading to arginine and/or urea and the other to pyrimidine nucleotides. The large subunit (synthetase) binds the substrates ammonia (free or transferred from glutamine from the small subunit), hydrogencarbonate and ATP and carries out an ATP-coupled ligase reaction, activating hydrogencarbonate by forming carboxy phosphate which reacts with ammonia to form carbamoyl phosphate. This chain is Carbamoyl phosphate synthase large chain, found in Bacillus cereus (strain B4264).